The primary structure comprises 87 residues: Small ribosomal subunit protein bS20 (87 aa).

Positions 1–27 are disordered; the sequence is MANSVQATKRARQAEKHRQHNAGMRAA. Residues 9-20 show a composition bias toward basic residues; sequence KRARQAEKHRQH.

The protein belongs to the bacterial ribosomal protein bS20 family.

Functionally, binds directly to 16S ribosomal RNA. This Hydrogenovibrio crunogenus (strain DSM 25203 / XCL-2) (Thiomicrospira crunogena) protein is Small ribosomal subunit protein bS20.